The primary structure comprises 347 residues: Probable dual-specificity RNA methyltransferase RlmN (347 aa).

Catalysis depends on E93, which acts as the Proton acceptor. One can recognise a Radical SAM core domain in the interval 100–323 (KAKRKTACVS…KKAGLNISTR (224 aa)). A disulfide bridge links C107 with C334. 3 residues coordinate [4Fe-4S] cluster: C114, C118, and C121. Residues 160-161 (GE), S192, 215-217 (SLT), and N291 each bind S-adenosyl-L-methionine. The active-site S-methylcysteine intermediate is C334.

The protein belongs to the radical SAM superfamily. RlmN family. The cofactor is [4Fe-4S] cluster.

It is found in the cytoplasm. It carries out the reaction adenosine(2503) in 23S rRNA + 2 reduced [2Fe-2S]-[ferredoxin] + 2 S-adenosyl-L-methionine = 2-methyladenosine(2503) in 23S rRNA + 5'-deoxyadenosine + L-methionine + 2 oxidized [2Fe-2S]-[ferredoxin] + S-adenosyl-L-homocysteine. The catalysed reaction is adenosine(37) in tRNA + 2 reduced [2Fe-2S]-[ferredoxin] + 2 S-adenosyl-L-methionine = 2-methyladenosine(37) in tRNA + 5'-deoxyadenosine + L-methionine + 2 oxidized [2Fe-2S]-[ferredoxin] + S-adenosyl-L-homocysteine. Functionally, specifically methylates position 2 of adenine 2503 in 23S rRNA and position 2 of adenine 37 in tRNAs. The polypeptide is Probable dual-specificity RNA methyltransferase RlmN (Treponema denticola (strain ATCC 35405 / DSM 14222 / CIP 103919 / JCM 8153 / KCTC 15104)).